The chain runs to 226 residues: Translation initiation factor 6 (226 aa).

Belongs to the eIF-6 family.

In terms of biological role, binds to the 50S ribosomal subunit and prevents its association with the 30S ribosomal subunit to form the 70S initiation complex. The sequence is that of Translation initiation factor 6 from Haloquadratum walsbyi (strain DSM 16790 / HBSQ001).